Reading from the N-terminus, the 385-residue chain is 3-hydroxyisobutyryl-CoA hydrolase, mitochondrial (385 aa).

A mitochondrion-targeting transit peptide spans 1–32; the sequence is MGQPYAWRLLSRVSSFRRASVILQHLRMSMHT. Lys-54, Lys-91, and Lys-100 each carry N6-acetyllysine; alternate. N6-succinyllysine; alternate occurs at positions 54, 91, and 100. Substrate is bound by residues Glu-120, Gly-145, Glu-168, and Asp-176. Lys-220 carries the N6-acetyllysine; alternate modification. Lys-220 carries the post-translational modification N6-succinyllysine; alternate. Ser-233 is subject to Phosphoserine. 2 positions are modified to N6-succinyllysine: Lys-249 and Lys-256. N6-acetyllysine; alternate is present on Lys-296. At Lys-296 the chain carries N6-succinyllysine; alternate. Lys-300 carries the post-translational modification N6-succinyllysine. The residue at position 352 (Lys-352) is an N6-acetyllysine; alternate. N6-succinyllysine; alternate is present on Lys-352. 2 positions are modified to N6-acetyllysine: Lys-359 and Lys-364. Lys-376 carries the post-translational modification N6-succinyllysine.

This sequence belongs to the enoyl-CoA hydratase/isomerase family.

The protein resides in the mitochondrion. It catalyses the reaction 3-hydroxy-2-methylpropanoyl-CoA + H2O = 3-hydroxy-2-methylpropanoate + CoA + H(+). The protein operates within amino-acid degradation; L-valine degradation. Its function is as follows. Hydrolyzes 3-hydroxyisobutyryl-CoA (HIBYL-CoA), a saline catabolite. Has high activity toward isobutyryl-CoA. Could be an isobutyryl-CoA dehydrogenase that functions in valine catabolism. Also hydrolyzes 3-hydroxypropanoyl-CoA. The polypeptide is 3-hydroxyisobutyryl-CoA hydrolase, mitochondrial (Hibch) (Mus musculus (Mouse)).